We begin with the raw amino-acid sequence, 686 residues long: Cadmium, zinc and cobalt-transporting ATPase (686 aa).

Residues 1-62 (MQEYHIHNLD…FIKQNEPHLS (62 aa)) form the HMA domain. At 1-72 (MQEYHIHNLD…LSFKEATEKP (72 aa)) the chain is on the cytoplasmic side. Cd(2+) is bound by residues C11 and C14. 2 residues coordinate Co(2+): C11 and C14. Zn(2+) contacts are provided by C11 and C14. The helical transmembrane segment at 73–92 (LSFTPLIITIMVFLGAILIL) threads the bilayer. Topologically, residues 93-102 (HLNPSPLIEK) are extracellular. The chain crosses the membrane as a helical span at residues 103–124 (AMFFVLALVYLVSGKDVILGAF). Residues 125-131 (RGLRKGQ) lie on the Cytoplasmic side of the membrane. The helical transmembrane segment at 132-151 (FFDENALMLIATIAAFFVGA) threads the bilayer. Residues 152–154 (YEE) are Extracellular-facing. The helical transmembrane segment at 155-174 (SVSIMVFYSAGEFLQKLAVS) threads the bilayer. Over 175-308 (RSKKSLKALV…ITKFSRYYTP (134 aa)) the chain is Cytoplasmic. A helical membrane pass occupies residues 309–327 (SVLFIALMIAVLPPLFSMG). Residues 328–332 (SFDEW) lie on the Extracellular side of the membrane. The chain crosses the membrane as a helical span at residues 333-350 (IYRGLVALMVSCPCALVI). Residues 351–635 (SVPLGYFGGV…VLAIAKKTKS (285 aa)) are Cytoplasmic-facing. The active-site 4-aspartylphosphate intermediate is D388. Mg(2+) contacts are provided by D583 and D587. The helical transmembrane segment at 636–657 (IIWQNILFALGIKAVFIVLGLM) threads the bilayer. The Extracellular segment spans residues 658-665 (GVASLWEA). Residues 666–681 (VFGDVGVTLLALANSM) traverse the membrane as a helical segment. The Cytoplasmic portion of the chain corresponds to 682 to 686 (RAMRA).

This sequence belongs to the cation transport ATPase (P-type) (TC 3.A.3) family. Type IB subfamily.

Its subcellular location is the cell membrane. It carries out the reaction Zn(2+)(in) + ATP + H2O = Zn(2+)(out) + ADP + phosphate + H(+). It catalyses the reaction Cd(2+)(in) + ATP + H2O = Cd(2+)(out) + ADP + phosphate + H(+). In terms of biological role, couples the hydrolysis of ATP with the transport of cadmium, zinc and cobalt out of the cell. This ion efflux may influence the activity of urease, which is essential for the survival of the bacterium in the gastric environment. The sequence is that of Cadmium, zinc and cobalt-transporting ATPase (cadA) from Helicobacter pylori (strain ATCC 700392 / 26695) (Campylobacter pylori).